Here is a 487-residue protein sequence, read N- to C-terminus: MNQDTPLANLNGPEVPSGNVPPANPPGRTNVAPPAQGAVQQPPAPAARRARNPHGPVPPAGPSRSAGAPAMLELSAAYPMYTEQRRAPNYYVPDAQLLFHTLGVCDQLMTTTDRFLRSMPSWLPIVSQLYVSVLWNVMILKVYVNTGYGAAYAHDLDVLLNHLQINECMIPGPLVPFFQSLAAVNGPFDWIGDIIPAMPSFTELWTDEFAPHAAYARQIPIPAILLDQLYRFATLAFDAQLQTNYATFEWYSNIFNQDVNTHNARLRLGPQLCGSLFTTQAQCDSARAFWNPAFANGFTRIDAANGPLMAFPQLLGFISQDGALQSNWFMHISLIMHKYAQYFNGSVPLKSISPVGIGASVIYGTPLEDTNVRDWLYPAAAAIAPFRSTRFLPRRELPATLAVRFAHADHEIEEQAEQYSILCHTNMKWYVNNATQNNHTAIEGNYIHQGEYWNFTPFRYSPPVSLKTQFAQVIASRYHQQAANRAE.

The disordered stretch occupies residues 1-66 (MNQDTPLANL…VPPAGPSRSA (66 aa)). A compositionally biased stretch (low complexity) spans 30–41 (NVAPPAQGAVQQ).

The protein resides in the virion. The capsid protein self-assembles to form an icosahedral capsid with a T=2 symmetry made of 120 subunits. This Trifolium repens (Creeping white clover) protein is Capsid protein.